A 1091-amino-acid polypeptide reads, in one-letter code: Protein diaphanous (1091 aa).

Residues 1–37 (MSRHEKTKSTGGGLLDSLFGRPSKSKGGTISSGTLAH) form a disordered region. Positions 1 to 56 (MSRHEKTKSTGGGLLDSLFGRPSKSKGGTISSGTLAHGGRPVSADNYVVPGVEDFE) are basic region. The span at 25 to 34 (SKGGTISSGT) shows a compositional bias: low complexity. Positions 59-431 (IQQLSVAELD…QIVFHKGYCD (373 aa)) constitute a GBD/FH3 domain. Residues 455-496 (KAKESKRSEEYEKKIEQLESAKQEAEAKAAHLEEKVKLMEAN) adopt a coiled-coil conformation. Disordered regions lie at residues 499 to 589 (AAPS…MMMG), 994 to 1021 (RLQE…DMDA), and 1039 to 1072 (GSAF…RTRV). The segment covering 512-572 (PMPPPPPGGG…MGGPPPPPMP (61 aa)) has biased composition (pro residues). The 85-residue stretch at 512 to 596 (PMPPPPPGGG…MMGPMVPVLP (85 aa)) folds into the FH1 domain. Residues 601–1001 (PKKKWDVKNP…KRRLQEAREQ (401 aa)) enclose the FH2 domain. The segment covering 994–1010 (RLQEAREQSAREQQERQ) has biased composition (basic and acidic residues). The 33-residue stretch at 1022 to 1054 (PQTQEGVMDSLLEALQTGSAFGQRNRQARRQRP) folds into the DAD domain.

It belongs to the formin homology family. Diaphanous subfamily. As to quaternary structure, may interact (via CBD/FH3 domain) with Rho1.

Its subcellular location is the cytoplasm. The protein localises to the cytoskeleton. It localises to the cleavage furrow. It is found in the apical cell membrane. Functionally, required for cytokinesis in both mitosis and meiosis. Has a role in actin cytoskeleton organization and is essential for many, if not all, actin-mediated events involving membrane invagination. May serve as a mediator between signaling molecules and actin organizers at specific phases of the cell cycle. Possible component of the contractile ring or may control its function. The protein is Protein diaphanous (dia) of Drosophila melanogaster (Fruit fly).